The chain runs to 352 residues: MWRFCFFLSLLFFDVSAVKSAESIFLPSQIGVEDSRVFESLSLSPVCSAADPNLNYKPVIGILTHPGEGRWDARLHSLKNYAYATNISYIAASYVKLAETGGARVIPLIYNEPEEILFQKLELVNGVIFTGGWAKTGLYYDVVEKIFNKVMEKNDAGEHFPVYAMCLGFEILSMIISQNRDILERFNSVNYASSLQFFKNVNIEATVFQRFPPELLKKLSADCLVMQNHYFGISPDNFQGNPYLSSFFNIVTTSADKDSKTFVSTIRSKRYPVTAFQWHPEKNAFEWGSSEIPHSEDAIQVTQHAANYLVSEARKSMNRPSSEKVLSNLIYNYKPTYSGYKGSGDDEVYIFT.

The N-terminal stretch at 1–19 (MWRFCFFLSLLFFDVSAVK) is a signal peptide. One can recognise a Gamma-glutamyl hydrolase domain in the interval 49-352 (AADPNLNYKP…SGDDEVYIFT (304 aa)). Residue Cys166 is the Nucleophile of the active site. Residue His279 is part of the active site.

The protein belongs to the peptidase C26 family.

The protein localises to the vacuole. Its subcellular location is the secreted. The protein resides in the extracellular space. It is found in the cell wall. The catalysed reaction is (6S)-5,6,7,8-tetrahydrofolyl-(gamma-L-Glu)(n) + (n-1) H2O = (6S)-5,6,7,8-tetrahydrofolate + (n-1) L-glutamate. Functionally, cleaves the polyglutamate sidechains of folate polyglutamates in the vacuole. Is important for polyglutamyl tail length determination before vacuolar exit. Plays a role on folate stability and intracellular folate content. In Arabidopsis thaliana (Mouse-ear cress), this protein is Probable gamma-glutamyl hydrolase 3 (GGH3).